We begin with the raw amino-acid sequence, 506 residues long: Maturase K (506 aa).

This sequence belongs to the intron maturase 2 family. MatK subfamily.

It is found in the plastid. The protein localises to the chloroplast. Its function is as follows. Usually encoded in the trnK tRNA gene intron. Probably assists in splicing its own and other chloroplast group II introns. The protein is Maturase K of Lathyrus sativus (White vetchling).